The following is a 900-amino-acid chain: Translation initiation factor IF-2 (900 aa).

Basic and acidic residues-rich tracts occupy residues 119 to 158 (AAKA…EKQE), 165 to 191 (ADEK…KADA), and 198 to 229 (EEAR…DHHV). The segment at 119 to 306 (AAKAEAEAKA…NARSVAPESM (188 aa)) is disordered. The segment covering 257–272 (SANAGNNANSNSNAGS) has biased composition (low complexity). Positions 400–569 (PRAPVVTIMG…LLESEVLELK (170 aa)) constitute a tr-type G domain. The interval 409 to 416 (GHVDHGKT) is G1. 409–416 (GHVDHGKT) serves as a coordination point for GTP. Positions 434-438 (GITQH) are G2. A G3 region spans residues 455 to 458 (DTPG). GTP is bound by residues 455 to 459 (DTPGH) and 509 to 512 (NKID). The G4 stretch occupies residues 509-512 (NKID). The interval 545–547 (SAK) is G5.

The protein belongs to the TRAFAC class translation factor GTPase superfamily. Classic translation factor GTPase family. IF-2 subfamily.

It is found in the cytoplasm. In terms of biological role, one of the essential components for the initiation of protein synthesis. Protects formylmethionyl-tRNA from spontaneous hydrolysis and promotes its binding to the 30S ribosomal subunits. Also involved in the hydrolysis of GTP during the formation of the 70S ribosomal complex. This Shewanella piezotolerans (strain WP3 / JCM 13877) protein is Translation initiation factor IF-2.